The chain runs to 69 residues: ATP synthase F(0) complex subunit e, mitochondrial (69 aa).

Lys34 is modified (N6-acetyllysine). Ser66 is modified (phosphoserine).

This sequence belongs to the ATPase e subunit family. Component of the ATP synthase complex composed at least of ATP5F1A/subunit alpha, ATP5F1B/subunit beta, ATP5MC1/subunit c (homooctomer), MT-ATP6/subunit a, MT-ATP8/subunit 8, ATP5ME/subunit e, ATP5MF/subunit f, ATP5MG/subunit g, ATP5MK/subunit k, ATP5MJ/subunit j, ATP5F1C/subunit gamma, ATP5F1D/subunit delta, ATP5F1E/subunit epsilon, ATP5PF/subunit F6, ATP5PB/subunit b, ATP5PD/subunit d, ATP5PO/subunit OSCP. ATP synthase complex consists of a soluble F(1) head domain (subunits alpha(3) and beta(3)) - the catalytic core - and a membrane F(0) domain - the membrane proton channel (subunits c, a, 8, e, f, g, k and j). These two domains are linked by a central stalk (subunits gamma, delta, and epsilon) rotating inside the F1 region and a stationary peripheral stalk (subunits F6, b, d, and OSCP).

It localises to the mitochondrion. Its subcellular location is the mitochondrion inner membrane. In terms of biological role, subunit e, of the mitochondrial membrane ATP synthase complex (F(1)F(0) ATP synthase or Complex V) that produces ATP from ADP in the presence of a proton gradient across the membrane which is generated by electron transport complexes of the respiratory chain. ATP synthase complex consist of a soluble F(1) head domain - the catalytic core - and a membrane F(1) domain - the membrane proton channel. These two domains are linked by a central stalk rotating inside the F(1) region and a stationary peripheral stalk. During catalysis, ATP synthesis in the catalytic domain of F(1) is coupled via a rotary mechanism of the central stalk subunits to proton translocation. In vivo, can only synthesize ATP although its ATP hydrolase activity can be activated artificially in vitro. Part of the complex F(0) domain. In Homo sapiens (Human), this protein is ATP synthase F(0) complex subunit e, mitochondrial.